The sequence spans 117 residues: MGFRVLVLVVMATTSALPFTFSEEPGRSPFRPALRSEEAQALRHGLTLLLARRADGQPPDMRQPEMRRPEMRRPEVRQPEFAELSVGQRRWDVDQCMYYCLTGVVGYSYTECETMCT.

The N-terminal stretch at 1–22 (MGFRVLVLVVMATTSALPFTFS) is a signal peptide. Positions 23-90 (EEPGRSPFRP…FAELSVGQRR (68 aa)) are excised as a propeptide. Residues 53–79 (RADGQPPDMRQPEMRRPEMRRPEVRQP) are disordered. The span at 62–79 (RQPEMRRPEMRRPEVRQP) shows a compositional bias: basic and acidic residues. Intrachain disulfides connect cysteine 96–cysteine 116 and cysteine 100–cysteine 112.

It belongs to the conotoxin R superfamily. In terms of tissue distribution, expressed by the venom duct.

The protein resides in the secreted. The polypeptide is Conotoxin vil14.3 (Conus villepinii (Villepin's cone)).